Consider the following 261-residue polypeptide: Thiazole synthase (261 aa).

Residue Lys-102 is the Schiff-base intermediate with DXP of the active site. 1-deoxy-D-xylulose 5-phosphate is bound by residues Gly-163, 189-190, and 211-212; these read AG and NT.

The protein belongs to the ThiG family. Homotetramer. Forms heterodimers with either ThiH or ThiS.

The protein resides in the cytoplasm. It catalyses the reaction [ThiS sulfur-carrier protein]-C-terminal-Gly-aminoethanethioate + 2-iminoacetate + 1-deoxy-D-xylulose 5-phosphate = [ThiS sulfur-carrier protein]-C-terminal Gly-Gly + 2-[(2R,5Z)-2-carboxy-4-methylthiazol-5(2H)-ylidene]ethyl phosphate + 2 H2O + H(+). It functions in the pathway cofactor biosynthesis; thiamine diphosphate biosynthesis. Catalyzes the rearrangement of 1-deoxy-D-xylulose 5-phosphate (DXP) to produce the thiazole phosphate moiety of thiamine. Sulfur is provided by the thiocarboxylate moiety of the carrier protein ThiS. In vitro, sulfur can be provided by H(2)S. This is Thiazole synthase from Myxococcus xanthus (strain DK1622).